A 161-amino-acid polypeptide reads, in one-letter code: 2-C-methyl-D-erythritol 2,4-cyclodiphosphate synthase (161 aa).

Positions 10 and 12 each coordinate a divalent metal cation. Residues 10 to 12 (DVH) and 36 to 37 (HS) contribute to the 4-CDP-2-C-methyl-D-erythritol 2-phosphate site. Histidine 44 contacts a divalent metal cation. Residues 58 to 60 (DIG), 63 to 67 (FPDTD), 134 to 137 (TTTE), phenylalanine 141, and arginine 144 each bind 4-CDP-2-C-methyl-D-erythritol 2-phosphate.

It belongs to the IspF family. As to quaternary structure, homotrimer. It depends on a divalent metal cation as a cofactor.

It catalyses the reaction 4-CDP-2-C-methyl-D-erythritol 2-phosphate = 2-C-methyl-D-erythritol 2,4-cyclic diphosphate + CMP. It participates in isoprenoid biosynthesis; isopentenyl diphosphate biosynthesis via DXP pathway; isopentenyl diphosphate from 1-deoxy-D-xylulose 5-phosphate: step 4/6. Its function is as follows. Involved in the biosynthesis of isopentenyl diphosphate (IPP) and dimethylallyl diphosphate (DMAPP), two major building blocks of isoprenoid compounds. Catalyzes the conversion of 4-diphosphocytidyl-2-C-methyl-D-erythritol 2-phosphate (CDP-ME2P) to 2-C-methyl-D-erythritol 2,4-cyclodiphosphate (ME-CPP) with a corresponding release of cytidine 5-monophosphate (CMP). The protein is 2-C-methyl-D-erythritol 2,4-cyclodiphosphate synthase of Shewanella putrefaciens (strain CN-32 / ATCC BAA-453).